The chain runs to 825 residues: Breast cancer anti-estrogen resistance protein 3 (825 aa).

N-acetylalanine is present on Ala2. A phosphoserine mark is found at Ser32, Ser78, and Ser83. The interval 40–106 is disordered; that stretch reads DAYQDVSIHG…DRHGETFTFR (67 aa). A compositionally biased stretch (polar residues) spans 79-94; sequence PRQNSPVTQDGIQESP. The segment covering 95–106 has biased composition (basic and acidic residues); sequence WQDRHGETFTFR. Residues 154 to 253 form the SH2 domain; that stretch reads WYHGRIPRQV…QSGAIIFQPI (100 aa). Residues Ser182 and Ser290 each carry the phosphoserine modification. Lys334 is modified (N6-methyllysine). Residues Ser358, Ser363, and Ser375 each carry the phosphoserine modification. At Arg442 the chain carries Omega-N-methylarginine. Ser471 is subject to Phosphoserine. Residues 548 to 818 form the Ras-GEF domain; sequence DPKVIAQHVL…TALSRKLEPP (271 aa). The tract at residues 744-748 is mediates the interaction with BCAR1/p130CAS; it reads LATAR.

In terms of assembly, part of a complex comprised of PTPRA, BCAR1, BCAR3 (via SH2 domain) and SRC; the formation of the complex is dependent on integrin mediated-tyrosine phosphorylation of PTPRA. Within the complex, interacts (via SH2 domain) with PTPRA (when phosphorylated on 'Tyr-798'). Interacts (via Ras-GEF domain) with BCAR1. Interacts (via Ras-GEF domain) with NEDD9. Interacts with PTK2/FAK1. Interacts with PTPN1. Interacts (via SH2 domain) with EGFR (when tyrosine-phosphorylated). Post-translationally, phosphorylated on tyrosine residues. In terms of tissue distribution, ubiquitously expressed. Found in several cancer cell lines, but not in nonmalignant breast tissue.

It is found in the cytoplasm. Its subcellular location is the cell junction. It localises to the focal adhesion. In terms of biological role, acts as an adapter protein downstream of several growth factor receptors to promote cell proliferation, migration, and redistribution of actin fibers. Specifically involved in INS/insulin signaling pathway by mediating MAPK1/ERK2-MAPK3/ERK1 activation and DNA synthesis. Promotes insulin-mediated membrane ruffling. In response to vasoconstrictor peptide EDN1, involved in the activation of RAP1 downstream of PTK2B via interaction with phosphorylated BCAR1. Inhibits cell migration and invasion via regulation of TGFB-mediated matrix digestion, actin filament rearrangement, and inhibition of invadopodia activity. May inhibit TGFB-SMAD signaling, via facilitating BCAR1 and SMAD2 and/or SMAD3 interaction. Regulates EGF-induced DNA synthesis. Required for the maintenance of ocular lens morphology and structural integrity, potentially via regulation of focal adhesion complex signaling. Acts upstream of PTPRA to regulate the localization of BCAR1 and PTPRA to focal adhesions, via regulation of SRC-mediated phosphorylation of PTPRA. Positively regulates integrin-induced tyrosine phosphorylation of BCAR1. Acts as a guanine nucleotide exchange factor (GEF) for small GTPases RALA, RAP1A and RRAS. However, in a contrasting study, lacks GEF activity towards RAP1. The sequence is that of Breast cancer anti-estrogen resistance protein 3 (BCAR3) from Homo sapiens (Human).